The sequence spans 518 residues: MQTGFSNSRMNSFISSVLVLHFNKQEIKFEPSVWCEAIDIHNTFSAGEIITGDIICFQKILKPPDIPKYPSVASFLQHVCDRKTYEEVRKVHILEEEIVTLKHQADTYLVQKEKAVTAYDQLKHERDNAVQQVNELRDQSTHIILDFSRKDMEQATEHFKNAREVGDTEYGHTYKGMIHNMKVLIKLSSSQKLFQQEVSILRQWRHPNIITFIGVCSEVSALVYEWLPNGNLEDRIICTNNSAPLSWYNRTQIIGEICCALLFLHSNKSTALVHGDLRPCNILIDANYRSKICNFGMSNLFLQLGTFPPNLTARLPYMDPEFNTTGELTTLSDVYSLGVIILRLLTGMPPLTLSEKVAEALGSDSLHLLIDKSAGDWPYIEAKQLALIGLSCTGMTRKKRPDLLNEVWIVIEPLTRKPPAATWPYLQSASGDSSVPAAFICPISMEIMKDPQVASDGFTYEAEAIRCWFDRGISRSPMTNLALPNLNLVPNRVLRSFIHGYLQQQQPNPAYQQQLSET.

The stretch at glutamate 86 to histidine 142 forms a coiled coil. Positions phenylalanine 159–isoleucine 409 constitute a Protein kinase domain. In terms of domain architecture, U-box spans serine 434–asparagine 508.

The catalysed reaction is S-ubiquitinyl-[E2 ubiquitin-conjugating enzyme]-L-cysteine + [acceptor protein]-L-lysine = [E2 ubiquitin-conjugating enzyme]-L-cysteine + N(6)-ubiquitinyl-[acceptor protein]-L-lysine.. Its pathway is protein modification; protein ubiquitination. In terms of biological role, possesses E3 ubiquitin-protein ligase in vitro. May be involved in cell death signaling. The polypeptide is U-box domain-containing protein 57 (PUB57) (Oryza sativa subsp. japonica (Rice)).